A 456-amino-acid chain; its full sequence is Bifunctional protein GlmU (456 aa).

Positions 1-229 (MLNSAMSVVI…ISETDGVNNR (229 aa)) are pyrophosphorylase. UDP-N-acetyl-alpha-D-glucosamine is bound by residues 11–14 (LAAG), Lys-25, Gln-76, 81–82 (GT), 103–105 (YGD), Gly-140, Glu-154, Asn-169, and Asn-227. Position 105 (Asp-105) interacts with Mg(2+). Position 227 (Asn-227) interacts with Mg(2+). The tract at residues 230-250 (LQLSRLERIYQAEQAEKLLLS) is linker. An N-acetyltransferase region spans residues 251 to 456 (GVMLRDPARF…QGWQRPVKKK (206 aa)). Positions 333 and 351 each coordinate UDP-N-acetyl-alpha-D-glucosamine. The active-site Proton acceptor is the His-363. UDP-N-acetyl-alpha-D-glucosamine-binding residues include Tyr-366 and Asn-377. Acetyl-CoA contacts are provided by residues Ala-380, 386–387 (NY), Ser-405, Ala-423, and Arg-440.

In the N-terminal section; belongs to the N-acetylglucosamine-1-phosphate uridyltransferase family. The protein in the C-terminal section; belongs to the transferase hexapeptide repeat family. Homotrimer. Mg(2+) is required as a cofactor.

The protein localises to the cytoplasm. It catalyses the reaction alpha-D-glucosamine 1-phosphate + acetyl-CoA = N-acetyl-alpha-D-glucosamine 1-phosphate + CoA + H(+). The catalysed reaction is N-acetyl-alpha-D-glucosamine 1-phosphate + UTP + H(+) = UDP-N-acetyl-alpha-D-glucosamine + diphosphate. It participates in nucleotide-sugar biosynthesis; UDP-N-acetyl-alpha-D-glucosamine biosynthesis; N-acetyl-alpha-D-glucosamine 1-phosphate from alpha-D-glucosamine 6-phosphate (route II): step 2/2. Its pathway is nucleotide-sugar biosynthesis; UDP-N-acetyl-alpha-D-glucosamine biosynthesis; UDP-N-acetyl-alpha-D-glucosamine from N-acetyl-alpha-D-glucosamine 1-phosphate: step 1/1. It functions in the pathway bacterial outer membrane biogenesis; LPS lipid A biosynthesis. Catalyzes the last two sequential reactions in the de novo biosynthetic pathway for UDP-N-acetylglucosamine (UDP-GlcNAc). The C-terminal domain catalyzes the transfer of acetyl group from acetyl coenzyme A to glucosamine-1-phosphate (GlcN-1-P) to produce N-acetylglucosamine-1-phosphate (GlcNAc-1-P), which is converted into UDP-GlcNAc by the transfer of uridine 5-monophosphate (from uridine 5-triphosphate), a reaction catalyzed by the N-terminal domain. The polypeptide is Bifunctional protein GlmU (Salmonella typhi).